Reading from the N-terminus, the 139-residue chain is Large ribosomal subunit protein mL54 (139 aa).

A mitochondrion-targeting transit peptide spans 1–50; that stretch reads MPFIESMAPLSRAITRGISQFSCYSNTLVLRSSRNSSSSLVKRSYVSSRV. Residues 35–50 are compositionally biased toward low complexity; the sequence is NSSSSLVKRSYVSSRV. Residues 35 to 74 form a disordered region; the sequence is NSSSSLVKRSYVSSRVSPKKPQHNSDATSSAQKVANKTHT. The segment covering 58-74 has biased composition (polar residues); the sequence is NSDATSSAQKVANKTHT.

The protein belongs to the mitochondrion-specific ribosomal protein mL54 family. Component of the mitochondrial large ribosomal subunit (mt-LSU). Mature yeast 74S mitochondrial ribosomes consist of a small (37S) and a large (54S) subunit. The 37S small subunit contains a 15S ribosomal RNA (15S mt-rRNA) and at least 32 different proteins. The 54S large subunit contains a 21S rRNA (21S mt-rRNA) and at least 45 different proteins.

It is found in the mitochondrion. Its function is as follows. Component of the mitochondrial ribosome (mitoribosome), a dedicated translation machinery responsible for the synthesis of mitochondrial genome-encoded proteins, including at least some of the essential transmembrane subunits of the mitochondrial respiratory chain. The mitoribosomes are attached to the mitochondrial inner membrane and translation products are cotranslationally integrated into the membrane. mL54 may have a meiosis-specific role as it accumulates during the middle stage of sporulation. The polypeptide is Large ribosomal subunit protein mL54 (mrpl37) (Schizosaccharomyces pombe (strain 972 / ATCC 24843) (Fission yeast)).